A 37-amino-acid chain; its full sequence is Chitinase-like protein (37 aa).

The tract at residues 1 to 20 (VLLSVGGDADTESPEKKNLG) is disordered. One can recognise a GH18 domain in the interval 1–37 (VLLSVGGDADTESPEKKNLGGVSIVDLSMDDFRGLLT).

It belongs to the glycosyl hydrolase 18 family. IDGF subfamily. Post-translationally, glycosylated.

Its subcellular location is the secreted. Cooperates with insulin-like peptides to stimulate the proliferation, polarization and motility of imaginal disk cells. May act by stabilizing the binding of insulin-like peptides to its receptor through a simultaneous interaction with both molecules to form a multiprotein signaling complex. The protein is Chitinase-like protein of Heliothis virescens (Tobacco budworm moth).